Consider the following 314-residue polypeptide: tRNA dimethylallyltransferase (314 aa).

Residue 11–18 (GPTGSGKT) coordinates ATP. 13 to 18 (TGSGKT) provides a ligand contact to substrate. The tract at residues 36 to 39 (DSMQ) is interaction with substrate tRNA.

It belongs to the IPP transferase family. Monomer. Requires Mg(2+) as cofactor.

The catalysed reaction is adenosine(37) in tRNA + dimethylallyl diphosphate = N(6)-dimethylallyladenosine(37) in tRNA + diphosphate. Catalyzes the transfer of a dimethylallyl group onto the adenine at position 37 in tRNAs that read codons beginning with uridine, leading to the formation of N6-(dimethylallyl)adenosine (i(6)A). This is tRNA dimethylallyltransferase from Chlamydia muridarum (strain MoPn / Nigg).